A 98-amino-acid polypeptide reads, in one-letter code: Large ribosomal subunit protein uL23 (98 aa).

Belongs to the universal ribosomal protein uL23 family. In terms of assembly, part of the 50S ribosomal subunit. Contacts protein L29, and trigger factor when it is bound to the ribosome.

In terms of biological role, one of the early assembly proteins it binds 23S rRNA. One of the proteins that surrounds the polypeptide exit tunnel on the outside of the ribosome. Forms the main docking site for trigger factor binding to the ribosome. The protein is Large ribosomal subunit protein uL23 of Methylobacterium nodulans (strain LMG 21967 / CNCM I-2342 / ORS 2060).